The primary structure comprises 450 residues: MRPFSLEVSLHLPWAMAAHLLPVCTLFLNLLSMTQGSRDPVVPNQPFTTIWNANTEWCMKKHGVDVDISIFDVVTNPGQTFRGPNMTIFYSSQLGTYPYYTSAGEPVFGGLPQNASLNAHLARTFQDILAAMPEPRFSGLAVIDWEAWRPRWAFNWDTKDIYRQRSRALVQKQHPDWLAPRVEAAAQDQFEGAAEEWMAGTLKLGQALRPQGLWGFYNFPECYNYDFKSPNYTGRCPLNICAQNDQLGWLWGQSRALYPSIYLPAALEGTKKTQMFVQHRVAEAFRVAAGAGDPKLPVLPYMQLFYDMTNHFLPAEELEHSLGESAAQGAAGVVLWVSWLSTSTKESCQAIKEYVDTTLGPSILNVTSGARLCSQVLCSGHGRCARRPSYPKARLILNSTSFSIKPTPGGGPLTLQGALSLEDRLRMAVEFECRCYRGWRGTRCEQWGMW.

Positions 1-35 are cleaved as a signal peptide; the sequence is MRPFSLEVSLHLPWAMAAHLLPVCTLFLNLLSMTQ. 2 cysteine pairs are disulfide-bonded: C58/C348 and C222/C236. N-linked (GlcNAc...) asparagine glycosylation is present at N85. The Proton donor role is filled by E146. N-linked (GlcNAc...) asparagine glycosylation is found at N231 and N365. Intrachain disulfides connect C373–C384, C378–C433, and C435–C444. N398 is a glycosylation site (N-linked (GlcNAc...) asparagine). The EGF-like domain occupies 433–444; sequence CRCYRGWRGTRC.

The protein belongs to the glycosyl hydrolase 56 family.

The protein localises to the secreted. Its subcellular location is the lysosome. It carries out the reaction Random hydrolysis of (1-&gt;4)-linkages between N-acetyl-beta-D-glucosamine and D-glucuronate residues in hyaluronate.. May have a role in promoting tumor progression. May block the TGFB1-enhanced cell growth. In Bos taurus (Bovine), this protein is Hyaluronidase-1 (HYAL1).